A 1034-amino-acid chain; its full sequence is FACT complex subunit spt-16 (1034 aa).

Basic and acidic residues-rich tracts occupy residues 433 to 448 (EEQE…DQKK), 463 to 481 (TRNK…KELG), and 493 to 503 (SKQDGGTDEKK). The segment at 433–511 (EEQENRETER…KKVKKSNVSY (79 aa)) is disordered. The stretch at 617-642 (LSTAFRQIKEMQKRFRTEEAEEREKD) forms a coiled coil. Composition is skewed to acidic residues over residues 926–950 (AESE…EADA) and 959–983 (SDED…DSDE). A disordered region spans residues 926–1034 (AESEGEDAGD…KAGPSHKRRK (109 aa)). Positions 984–1020 (SEGKDWSDLEEEAAKADKRREVEDGGRDRDRDRDRKR) are enriched in basic and acidic residues. Residues 1021–1034 (PSSSKAGPSHKRRK) are compositionally biased toward basic residues.

It belongs to the peptidase M24 family. SPT16 subfamily. In terms of assembly, component of the FACT complex, a stable heterodimer of spt-16 and hmg-3 or hmg-4.

The protein localises to the nucleus. Its subcellular location is the chromosome. Its function is as follows. Component of the FACT complex, a general chromatin factor that acts to reorganize nucleosomes. The FACT complex is involved in multiple processes that require DNA as a template such as mRNA elongation, DNA replication and DNA repair. During transcription elongation the FACT complex acts as a histone chaperone that both destabilizes and restores nucleosomal structure. It facilitates the passage of RNA polymerase II and transcription by promoting the dissociation of one histone H2A-H2B dimer from the nucleosome, then subsequently promotes the reestablishment of the nucleosome following the passage of RNA polymerase II. This is FACT complex subunit spt-16 (spt-16) from Caenorhabditis briggsae.